The chain runs to 194 residues: MEQKTMSIELREKNGKGVARKLRAQDVVPGVVYGKGIEPVSVKVAAKDLAATIAGEGGLNSLITLSGGGSLNGNIVIVADMQRNPLKGDILHVDFHRISLDEKVKVHVPLVMVGTAAGVKEGGMLDVVTYSLDVECLPTAIPEAINVDVTNLAIGHSIHVSELVLPAGIKVLNDPETPIVSIHGKAKEEAPAAE.

This sequence belongs to the bacterial ribosomal protein bL25 family. CTC subfamily. Part of the 50S ribosomal subunit; part of the 5S rRNA/L5/L18/L25 subcomplex. Contacts the 5S rRNA. Binds to the 5S rRNA independently of L5 and L18.

Functionally, this is one of the proteins that binds to the 5S RNA in the ribosome where it forms part of the central protuberance. In Geobacter sulfurreducens (strain ATCC 51573 / DSM 12127 / PCA), this protein is Large ribosomal subunit protein bL25.